Reading from the N-terminus, the 321-residue chain is tRNA U34 carboxymethyltransferase (321 aa).

Residues K90, W104, K109, G129, 151 to 153 (DPT), 180 to 181 (IE), M195, Y199, and R314 contribute to the carboxy-S-adenosyl-L-methionine site.

It belongs to the class I-like SAM-binding methyltransferase superfamily. CmoB family. In terms of assembly, homotetramer.

It carries out the reaction carboxy-S-adenosyl-L-methionine + 5-hydroxyuridine(34) in tRNA = 5-carboxymethoxyuridine(34) in tRNA + S-adenosyl-L-homocysteine + H(+). In terms of biological role, catalyzes carboxymethyl transfer from carboxy-S-adenosyl-L-methionine (Cx-SAM) to 5-hydroxyuridine (ho5U) to form 5-carboxymethoxyuridine (cmo5U) at position 34 in tRNAs. The sequence is that of tRNA U34 carboxymethyltransferase from Histophilus somni (strain 2336) (Haemophilus somnus).